Here is a 280-residue protein sequence, read N- to C-terminus: Small ribosomal subunit protein uS3 (280 aa).

Residues 38–106 form the KH type-2 domain; that stretch reads IRKLLATGLE…QVQLNILEVK (69 aa). Positions 216–280 are disordered; that stretch reads AAAPAADRPR…SAGQPETTES (65 aa). Over residues 237 to 270 the composition is skewed to low complexity; sequence SGASGTTATSTDAGRAASEGTVEAPATEAAATAP.

Belongs to the universal ribosomal protein uS3 family. As to quaternary structure, part of the 30S ribosomal subunit. Forms a tight complex with proteins S10 and S14.

Its function is as follows. Binds the lower part of the 30S subunit head. Binds mRNA in the 70S ribosome, positioning it for translation. This Mycolicibacterium vanbaalenii (strain DSM 7251 / JCM 13017 / BCRC 16820 / KCTC 9966 / NRRL B-24157 / PYR-1) (Mycobacterium vanbaalenii) protein is Small ribosomal subunit protein uS3.